The following is a 298-amino-acid chain: Probable GTP 3',8-cyclase (298 aa).

Residues 4–221 (RYGREIRSFR…VFTRKFMQNR (218 aa)) enclose the Radical SAM core domain. Arg13 is a binding site for GTP. Cys20 and Cys24 together coordinate [4Fe-4S] cluster. Residue Tyr26 coordinates S-adenosyl-L-methionine. Cys27 is a binding site for [4Fe-4S] cluster. Position 61 (Lys61) interacts with GTP. Gly65 provides a ligand contact to S-adenosyl-L-methionine. A GTP-binding site is contributed by Thr91. Residue Ser115 participates in S-adenosyl-L-methionine binding. Lys152 serves as a coordination point for GTP. Residues Cys243 and Cys246 each contribute to the [4Fe-4S] cluster site. 248–250 (RIR) contributes to the GTP binding site. Residue Cys260 coordinates [4Fe-4S] cluster.

It belongs to the radical SAM superfamily. MoaA family. The cofactor is [4Fe-4S] cluster.

The enzyme catalyses GTP + AH2 + S-adenosyl-L-methionine = (8S)-3',8-cyclo-7,8-dihydroguanosine 5'-triphosphate + 5'-deoxyadenosine + L-methionine + A + H(+). It functions in the pathway cofactor biosynthesis; molybdopterin biosynthesis. In terms of biological role, catalyzes the cyclization of GTP to (8S)-3',8-cyclo-7,8-dihydroguanosine 5'-triphosphate. This is Probable GTP 3',8-cyclase from Methanococcus maripaludis (strain C7 / ATCC BAA-1331).